Here is an 815-residue protein sequence, read N- to C-terminus: MSRAIIENAGEHRVSILINGMYPIDNINDVKMAYRDLLTDEDMFIFSAVAPTAYRHIENHGRSKAAQAARDIAIANIAPDIVYVISFFEGHSDSYTVSIPADNVPWKTVCVCHDLIPLLNKERYLGDPNFREFYMNKLAEFERADAIFAISQSAAQEVIEYTDIASDRVLNISSAVGEEFAVIDYSAERIQSLKDKYSLPDEFILSLAMIEPRKNIEALIHAYSLLPAELQQRYPMVLAYKVQPEQLERILRLAESYGLSRSQLIFTGFLTDDDLIALYNLCKLFVFPSLHEGFGLPPLEAMRCGAATLGSNITSLPEVIGWEDAMFNPHDVQDIRRVMEKALTDEAFYRELKAHALAQSAKFSWANTAHLAIEGFTRLLQSSQETDAGQAESVTASRLQMMQKIDALSEVDRLGLAWAVARNSFKRHTRKLLVDISVLAHDDAKTGIQRVSRSILSELLKSGVPGYEVSAVYYTPGECYRYANQYLSSHFPGEFGADEPVLFSKDDVLIATDLTAHLFPELVTQIDSMRAAGAFACFVVHDILPLRRPEWSIEGIQRDFPIWLSCLAEHADRLICVSASVAEDVKAWIAENRHWVKPNPLQTVSNFHLGADLDASVPSTGMPDNAQALLAAMAAAPSFIMVGTMEPRKGHAQTLAAFEELWREGKDYNLFIVGKQGWNVDSLCEKLRHHPQLNKKLFWLQNISDEFLAELYARSRALIFASQGEGFGLPLIEAAQKKLPVIIRDIPVFKEIAQEHAWYFSGEAPSDIAKAVEEWLALYEQNAHPRSENINWLTWKQSAEFLLKNLPIIAPAAKQ.

The segment at 1–374 (MSRAIIENAG…WANTAHLAIE (374 aa)) is alpha-(1-&gt;2)-mannosyltransferase. The alpha-(1-&gt;3)-mannosyltransferase stretch occupies residues 431-804 (KLLVDISVLA…WKQSAEFLLK (374 aa)).

It belongs to the glycosyltransferase group 1 family. Glycosyltransferase 4 subfamily. As to quaternary structure, monomer. Interacts with the C-terminal region of WbdD.

The protein resides in the cell inner membrane. The catalysed reaction is [alpha-D-Man-(1-&gt;3)-alpha-D-Man-(1-&gt;3)-alpha-D-Man-(1-&gt;2)-alpha-D-Man-(1-&gt;2)](n)-alpha-D-Man-(1-&gt;3)-alpha-D-Man-(1-&gt;3)-alpha-D-Man-(1-&gt;3)-alpha-D-GlcNAc-di-trans,octa-cis-undecaprenyl diphosphate + 2 GDP-alpha-D-mannose = alpha-D-Man-(1-&gt;2)-alpha-D-Man-(1-&gt;2)-[alpha-D-Man-(1-&gt;3)-alpha-D-Man-(1-&gt;3)-alpha-D-Man-(1-&gt;2)-alpha-D-Man-(1-&gt;2)](n)-alpha-D-Man-(1-&gt;3)-alpha-D-Man-(1-&gt;3)-alpha-D-Man-(1-&gt;3)-alpha-D-GlcNAc-di-trans,octa-cis-undecaprenyl diphosphate + 2 GDP + 2 H(+). It carries out the reaction alpha-D-Man-(1-&gt;2)-alpha-D-Man-(1-&gt;2)-[alpha-D-Man-(1-&gt;3)-alpha-D-Man-(1-&gt;3)-alpha-D-Man-(1-&gt;2)-alpha-D-Man-(1-&gt;2)](n)-alpha-D-Man-(1-&gt;3)-alpha-D-Man-(1-&gt;3)-alpha-D-Man-(1-&gt;3)-alpha-D-GlcNAc-di-trans,octa-cis-undecaprenyl diphosphate + 2 GDP-alpha-D-mannose = [alpha-D-Man-(1-&gt;3)-alpha-D-Man-(1-&gt;3)-alpha-D-Man-(1-&gt;2)-alpha-D-Man-(1-&gt;2)](n+1)-alpha-D-Man-(1-&gt;3)-alpha-D-Man-(1-&gt;3)-alpha-D-Man-(1-&gt;3)-alpha-D-GlcNAc-di-trans,octa-cis-undecaprenyl diphosphate + 2 GDP + 2 H(+). It functions in the pathway bacterial outer membrane biogenesis; LPS O-antigen biosynthesis. Functionally, mannosyltransferase involved in the biosynthesis of the repeat unit of the lipopolysaccharide (LPS) O-antigen region. Catalyzes the polymerization of a tetrasaccharide repeat unit containing two alpha-(1-&gt;3)- and two alpha-(1-&gt;2)-linked mannopyranose residues. The protein is Serotype-specific mannosyltransferase WbdA of Escherichia coli.